A 323-amino-acid chain; its full sequence is Methionyl-tRNA formyltransferase (323 aa).

117 to 120 serves as a coordination point for (6S)-5,6,7,8-tetrahydrofolate; that stretch reads SLLP.

Belongs to the Fmt family.

The catalysed reaction is L-methionyl-tRNA(fMet) + (6R)-10-formyltetrahydrofolate = N-formyl-L-methionyl-tRNA(fMet) + (6S)-5,6,7,8-tetrahydrofolate + H(+). Attaches a formyl group to the free amino group of methionyl-tRNA(fMet). The formyl group appears to play a dual role in the initiator identity of N-formylmethionyl-tRNA by promoting its recognition by IF2 and preventing the misappropriation of this tRNA by the elongation apparatus. The sequence is that of Methionyl-tRNA formyltransferase from Acidovorax ebreus (strain TPSY) (Diaphorobacter sp. (strain TPSY)).